The sequence spans 836 residues: Translation initiation factor IF-2 (836 aa).

The segment at 1–233 is disordered; the sequence is MSDTDGKKPL…RSLAAMKRKQ (233 aa). Over residues 18 to 27 the composition is skewed to polar residues; it reads SGQVKQSFSH. The segment covering 50–60 has biased composition (low complexity); it reads SGSSTTTSSPS. Basic and acidic residues predominate over residues 88–156; sequence KLREVEDAKR…AARRAEEAKR (69 aa). Low complexity predominate over residues 167-176; that stretch reads PAESRASAPP. A compositionally biased stretch (basic and acidic residues) spans 185–206; the sequence is SRKEREREADRDRTTKKDDSRR. Positions 333 to 501 constitute a tr-type G domain; sequence PRPPIITIMG…NIALQAEILD (169 aa). The tract at residues 342 to 349 is G1; the sequence is GHVDHGKT. 342 to 349 contributes to the GTP binding site; sequence GHVDHGKT. The tract at residues 367 to 371 is G2; it reads GITQH. The G3 stretch occupies residues 389-392; that stretch reads DTPG. GTP is bound by residues 389 to 393 and 443 to 446; these read DTPGH and NKID. The segment at 443–446 is G4; that stretch reads NKID. The tract at residues 479–481 is G5; it reads SAK.

Belongs to the TRAFAC class translation factor GTPase superfamily. Classic translation factor GTPase family. IF-2 subfamily.

The protein localises to the cytoplasm. In terms of biological role, one of the essential components for the initiation of protein synthesis. Protects formylmethionyl-tRNA from spontaneous hydrolysis and promotes its binding to the 30S ribosomal subunits. Also involved in the hydrolysis of GTP during the formation of the 70S ribosomal complex. The protein is Translation initiation factor IF-2 of Cereibacter sphaeroides (strain ATCC 17023 / DSM 158 / JCM 6121 / CCUG 31486 / LMG 2827 / NBRC 12203 / NCIMB 8253 / ATH 2.4.1.) (Rhodobacter sphaeroides).